The sequence spans 493 residues: Probable glycine dehydrogenase (decarboxylating) subunit 2 (493 aa).

K269 bears the N6-(pyridoxal phosphate)lysine mark.

The protein belongs to the GcvP family. C-terminal subunit subfamily. In terms of assembly, the glycine cleavage system is composed of four proteins: P, T, L and H. In this organism, the P 'protein' is a heterodimer of two subunits. Pyridoxal 5'-phosphate serves as cofactor.

The enzyme catalyses N(6)-[(R)-lipoyl]-L-lysyl-[glycine-cleavage complex H protein] + glycine + H(+) = N(6)-[(R)-S(8)-aminomethyldihydrolipoyl]-L-lysyl-[glycine-cleavage complex H protein] + CO2. Its function is as follows. The glycine cleavage system catalyzes the degradation of glycine. The P protein binds the alpha-amino group of glycine through its pyridoxal phosphate cofactor; CO(2) is released and the remaining methylamine moiety is then transferred to the lipoamide cofactor of the H protein. In Chloroherpeton thalassium (strain ATCC 35110 / GB-78), this protein is Probable glycine dehydrogenase (decarboxylating) subunit 2.